Here is an 842-residue protein sequence, read N- to C-terminus: Transient receptor potential cation channel subfamily V member 1 (842 aa).

Residues 1 to 64 (MKRWVSLDSG…DSEETSPMDC (64 aa)) form a disordered region. Topologically, residues 1-435 (MKRWVSLDSG…QDKWDRVVKR (435 aa)) are cytoplasmic. A compositionally biased stretch (acidic residues) spans 10–21 (GESEDPLPEDTC). An ANK 1 repeat occupies 113 to 141 (KLYDRRRIFEAVAQNNCQELESLLCFLQR). Arginine 118 provides a ligand contact to ATP. Threonine 147 carries the post-translational modification Phosphothreonine; by PKA; in vitro. One copy of the ANK 2 repeat lies at 156–188 (TGKTCLLKAMLNLHSGQNDTIPLLLEIARQTDS). ATP is bound by residues lysine 158, lysine 163, asparagine 167, 202–205 (YKGQ), and 213–214 (ER). ANK repeat units follow at residues 206-231 (TALHIAIERRNMALVTLLVENGADVQ), 252-279 (ELPLSLAACTNQLAIVKFLLQNSWQPAD), 288-324 (NTVLHALVEVADNTPDNTKFVTSMYNEILILGAKLHP), and 338-361 (TPLALAAGSGKIGVLAYILQREIL). Threonine 373 carries the post-translational modification Phosphothreonine; by PKA; in vitro. The stretch at 396–418 (NSVLEVIAYSSSETPNRHDMLLV) is one ANK 7 repeat. Residues 436-457 (IFYFNFFVYCLYMIIFTTAAYY) traverse the membrane as a helical segment. Residues 458–475 (RPVDGLPPYKLRNLPGDY) are Extracellular-facing. The chain crosses the membrane as a helical span at residues 476 to 500 (FRVTGEILSVAGGVYFFFRGIQYFL). Residues 501-513 (QRRPSMKALFVDS) are Cytoplasmic-facing. Serine 505 is subject to Phosphoserine; by PKC/PRKCE. 514-515 (YS) is a resiniferatoxin binding site. Residues 514–535 (YSEMLFFVQALFMLATVVLYFS) form a helical membrane-spanning segment. The Extracellular segment spans residues 536-538 (HCK). Residues 539-559 (EYVATMVFSLALGWINMLYYT) traverse the membrane as a helical segment. Residue arginine 560 coordinates resiniferatoxin. Topologically, residues 560–562 (RGF) are cytoplasmic. Residues 563-601 (QQMGIYAVMIEKMILRDLCRFMFVYLVFLFGFSTAVVTL) traverse the membrane as a helical segment. At 602–633 (IEDGKNSSTSAESTSHRWRGFGCRSSDSSYNS) the chain is on the extracellular side. Residue asparagine 607 is glycosylated (N-linked (GlcNAc...) asparagine). The segment at residues 634–655 (LYSTCLELFKFTIGMGDLEFTE) is an intramembrane region (pore-forming). Residue glycine 647 participates in Na(+) binding. A Selectivity filter motif is present at residues 647-650 (GMGD). Aspartate 650 provides a ligand contact to Ca(2+). At 656-659 (NYDF) the chain is on the extracellular side. The chain crosses the membrane as a helical span at residues 660 to 686 (KAVFIILLLAYVILTYILLLNMLIALM). Topologically, residues 687–842 (GETVNKIAQE…FKDSVAAAEK (156 aa)) are cytoplasmic. Residues 688-716 (ETVNKIAQESKSIWKLQRAITILDTEKGF) are AD. Position 708 is a phosphothreonine (threonine 708). The segment at 771-805 (EGVKRTLSFSLRSGRVSGRNWKNFALVPLLRDAST) is interaction with calmodulin. Position 778 is a phosphoserine (serine 778). Positions 781–796 (LRSGRVSGRNWKNFAL) are required for PIP2-mediated channel inhibition. Serine 804 carries the post-translational modification Phosphoserine; by PKC/PRKCE and PKC/PRKCZ. Serine 824 bears the Phosphoserine mark.

The protein belongs to the transient receptor (TC 1.A.4) family. TrpV subfamily. TRPV1 sub-subfamily. As to quaternary structure, homotetramer. Interacts with PIRT. May also form a heteromeric channel with TRPV3. Interacts with CALM, PRKCM and CSK. Interacts with PRKCG and NTRK1, probably by forming a trimeric complex. Interacts with the Scolopendra mutilans RhTx toxin. Interacts with TMEM100. Interacts with PACS2. Phosphorylation by PKA reverses capsaicin-induced dephosphorylation at multiple sites. Phosphorylation by CAMKII seems to regulate binding to vanilloids. Phosphorylated and modulated by PRKCE, PRKCM and probably PRKCZ. Dephosphorylation by calcineurin seems to lead to receptor desensitization and phosphorylation by CAMKII recovers activity.

It is found in the postsynaptic cell membrane. It localises to the cell projection. The protein resides in the dendritic spine membrane. Its subcellular location is the cell membrane. It catalyses the reaction Ca(2+)(in) = Ca(2+)(out). The catalysed reaction is Mg(2+)(in) = Mg(2+)(out). It carries out the reaction Na(+)(in) = Na(+)(out). The enzyme catalyses K(+)(in) = K(+)(out). Its activity is regulated as follows. The channel is sensitized by ATP binding. Repeated stimulation with capsaicin gives rise to progressively smaller responses, due to desensitization. This desensitization is triggered by the influx of calcium ions and is inhibited by elevated ATP levels. Ca(2+) and CALM displace ATP from its binding site and trigger a conformation change that leads to a closed, desensitized channel. The double-knot toxin (DkTx) from the Chinese earth tiger tarantula activates the channel and traps it in an open conformation. The Scolopendra mutilans RhTx toxin potentiates the heat activation pathway mediated by this channel by binding to the charge-rich outer pore region (in an activated state). Channel activity is activated via the interaction with PIRT and phosphatidylinositol 4,5-bisphosphate (PIP2). Both PIRT and PIP2 are required to activate channel activity. Intracellular PIP2 inhibits desensitization. Non-selective calcium permeant cation channel involved in detection of noxious chemical and thermal stimuli. Seems to mediate proton influx and may be involved in intracellular acidosis in nociceptive neurons. Involved in mediation of inflammatory pain and hyperalgesia. Sensitized by a phosphatidylinositol second messenger system activated by receptor tyrosine kinases, which involves PKC isozymes and PCL. Activation by vanilloids, like capsaicin, and temperatures higher than 42 degrees Celsius. Upon activation, exhibits a time- and Ca(2+)-dependent outward rectification, followed by a long-lasting refractory state. Mild extracellular acidic pH (6.5) potentiates channel activation by noxious heat and vanilloids, whereas acidic conditions (pH &lt;6) directly activate the channel. Can be activated by endogenous compounds, including 12-hydroperoxytetraenoic acid and bradykinin. Acts as ionotropic endocannabinoid receptor with central neuromodulatory effects. Triggers a form of long-term depression (TRPV1-LTD) mediated by the endocannabinoid anandamine in the hippocampus and nucleus accumbens by affecting AMPA receptors endocytosis. This Oryctolagus cuniculus (Rabbit) protein is Transient receptor potential cation channel subfamily V member 1 (Trpv1).